A 132-amino-acid chain; its full sequence is Glycine cleavage system H protein (132 aa).

The region spanning 24-106 (TVRVGLTDFA…YGAGWLLDVH (83 aa)) is the Lipoyl-binding domain. K65 is modified (N6-lipoyllysine).

The protein belongs to the GcvH family. The glycine cleavage system is composed of four proteins: P, T, L and H. Requires (R)-lipoate as cofactor.

The glycine cleavage system catalyzes the degradation of glycine. The H protein shuttles the methylamine group of glycine from the P protein to the T protein. This Mycobacterium leprae (strain Br4923) protein is Glycine cleavage system H protein.